The following is a 149-amino-acid chain: Ribonuclease HI (149 aa).

The region spanning 1 to 140 (MIIGYFDGLC…AYELVRRGKL (140 aa)) is the RNase H type-1 domain. The Mg(2+) site is built by Asp-7, Glu-52, Asp-76, and Asp-125. Mn(2+) is bound by residues Asp-7, Glu-52, Asp-76, and Asp-125. Cys-58 and Cys-145 form a disulfide bridge.

As to quaternary structure, monomer. Requires Mn(2+) as cofactor. It depends on Mg(2+) as a cofactor. The cofactor is Co(2+). Ni(2+) is required as a cofactor. In terms of processing, the disulfide bond confers considerable stability to the protein.

Its subcellular location is the cytoplasm. It catalyses the reaction Endonucleolytic cleavage to 5'-phosphomonoester.. In terms of biological role, nuclease that specifically degrades the RNA of RNA-DNA hybrids. Endonucleolytically removes RNA primers from the Okazaki fragments of lagging strand synthesis on its own. In the presence of Mn(2+) or Co(2+) can also cleave an RNA-RNA hybrid; the dsRNase activity is 10- 100-fold lower than RNase H activity. Complements the temperature-sensitive phenotype of an E.coli double rnhA/rnhB (RNase H) disruption mutant. The chain is Ribonuclease HI (rnhA) from Sulfurisphaera tokodaii (strain DSM 16993 / JCM 10545 / NBRC 100140 / 7) (Sulfolobus tokodaii).